Consider the following 296-residue polypeptide: GTPase Era (296 aa).

The Era-type G domain occupies 7–174 (HCGFVAIVGR…LDQVRPHLPE (168 aa)). The interval 15–22 (GRPNVGKS) is G1. 15–22 (GRPNVGKS) contributes to the GTP binding site. Residues 41-45 (QTTRH) form a G2 region. Residues 62-65 (DTPG) form a G3 region. GTP contacts are provided by residues 62 to 66 (DTPGF) and 123 to 126 (NKLD). The segment at 123 to 126 (NKLD) is G4. The tract at residues 153-155 (VSA) is G5. The 77-residue stretch at 205–281 (LGEELPYEMN…FLQVWVKVKS (77 aa)) folds into the KH type-2 domain.

Belongs to the TRAFAC class TrmE-Era-EngA-EngB-Septin-like GTPase superfamily. Era GTPase family. In terms of assembly, monomer.

The protein resides in the cytoplasm. Its subcellular location is the cell inner membrane. Its function is as follows. An essential GTPase that binds both GDP and GTP, with rapid nucleotide exchange. Plays a role in 16S rRNA processing and 30S ribosomal subunit biogenesis and possibly also in cell cycle regulation and energy metabolism. This chain is GTPase Era, found in Chromobacterium violaceum (strain ATCC 12472 / DSM 30191 / JCM 1249 / CCUG 213 / NBRC 12614 / NCIMB 9131 / NCTC 9757 / MK).